Consider the following 164-residue polypeptide: Single-stranded DNA-binding protein 2 (164 aa).

In terms of domain architecture, SSB spans 5-109; sequence INKVILVGNL…IVADEMQMLG (105 aa). Positions 105-164 are disordered; it reads MQMLGGRSDGGGMGGGGERPQRQTSQRQDYAPRRQARQPSQSPQSSPPPMDDFADDDIPF. Residues 111 to 122 show a composition bias toward gly residues; sequence RSDGGGMGGGGE. The short motif at 159 to 164 is the Important for interaction with partner proteins element; that stretch reads DDDIPF.

Homotetramer.

Its function is as follows. Plays an important role in DNA replication, recombination and repair. Binds to ssDNA and to an array of partner proteins to recruit them to their sites of action during DNA metabolism. This is Single-stranded DNA-binding protein 2 (ssb2) from Xylella fastidiosa (strain 9a5c).